The following is a 1117-amino-acid chain: Cytospin-A (1117 aa).

Disordered regions lie at residues 1–176 (MKKA…NQIS), 293–323 (SLSP…GSVE), and 358–390 (SSDD…NASE). Low complexity-rich tracts occupy residues 45 to 72 (TTAS…TNGV) and 99 to 119 (KIST…NKES). Basic and acidic residues-rich tracts occupy residues 120–131 (SSTRERLRERTR) and 158–171 (TTTE…KSKS). Positions 168–280 (KSKSDNQISD…LNALGFSLEQ (113 aa)) form a coiled coil. Positions 293–303 (SLSPEITPGNQ) are enriched in polar residues. A compositionally biased stretch (low complexity) spans 358–377 (SSDDALDAPSSSESEGIPSI). Phosphoserine occurs at positions 384, 385, and 389. 2 coiled-coil regions span residues 394–449 (ACLT…MESL) and 487–807 (RYME…RGRV). The segment at 852 to 878 (SQVPNPTAAAIPRTPLSPSPMKTPPAA) is disordered. Phosphoserine occurs at positions 868, 881, and 887. Positions 920 to 997 (TSSTSRPASL…PTTRSRIREE (78 aa)) are disordered. Basic and acidic residues predominate over residues 946-956 (RSSEEMKRDIS). Over residues 971–990 (TTSPQLSLSSSPTASVTPTT) the composition is skewed to low complexity. The region spanning 1011-1116 (GSKRNALLKW…YVTAIYKYFE (106 aa)) is the Calponin-homology (CH) domain.

This sequence belongs to the cytospin-A family. May interact with both microtubules and actin cytoskeleton.

Its subcellular location is the cytoplasm. It localises to the cytoskeleton. It is found in the spindle. The protein resides in the cell junction. The protein localises to the gap junction. Functionally, involved in cytokinesis and spindle organization. May play a role in actin cytoskeleton organization and microtubule stabilization and hence required for proper cell adhesion and migration. This is Cytospin-A (SPECC1L) from Canis lupus familiaris (Dog).